A 445-amino-acid chain; its full sequence is Exodeoxyribonuclease 7 large subunit (445 aa).

Belongs to the XseA family. In terms of assembly, heterooligomer composed of large and small subunits.

It is found in the cytoplasm. The catalysed reaction is Exonucleolytic cleavage in either 5'- to 3'- or 3'- to 5'-direction to yield nucleoside 5'-phosphates.. In terms of biological role, bidirectionally degrades single-stranded DNA into large acid-insoluble oligonucleotides, which are then degraded further into small acid-soluble oligonucleotides. In Shewanella halifaxensis (strain HAW-EB4), this protein is Exodeoxyribonuclease 7 large subunit.